The chain runs to 3890 residues: Extracellular matrix-binding protein EbhB (3890 aa).

The N-terminal stretch at 1-39 (MNYRDKIQKFSIRKYTVGTFSTVIATLVFLGFNTSQAHA) is a signal peptide. Over residues 41 to 59 (ETNQPASVVKQKQQSNNEQ) the composition is skewed to polar residues. Disordered stretches follow at residues 41–152 (ETNQ…GNDN), 249–277 (MPQR…PRSV), 1347–1372 (NEKA…NATT), and 2418–2438 (TITP…TLTA). A compositionally biased stretch (low complexity) spans 65–78 (SQVQNSQNSQNSQS). Polar residues predominate over residues 79-117 (LSATHENEQPNNSQANLVNQKVAQSSTTNDEQPASQNVN). Residues 130 to 140 (PDKEESKHKQN) are compositionally biased toward basic and acidic residues. Composition is skewed to polar residues over residues 141 to 151 (ESQSANKNGND), 250 to 266 (PQRQ…QTRS), 1360 to 1372 (YRTT…NATT), and 2427 to 2438 (HSVSSNPSTLTA). FIVAR domains lie at 2524-2580 (AKNH…VSDA), 2610-2666 (SKNN…ISDE), 2687-2750 (DTHA…VQSA), 2780-2836 (AKTK…IAAE), 2864-2919 (AKTQ…IRQN), 2947-3002 (AKNQ…INTN), 3030-3085 (AKTQ…INDK), 3154-3212 (AMTK…VNQK), 3280-3339 (AMTG…VNNA), 3407-3465 (AMGN…VNRA), 3533-3591 (AMGN…VTEA), 3659-3717 (AMNT…ITQK), and 3785-3843 (AMAN…VEAA).

The protein is Extracellular matrix-binding protein EbhB (ebhB) of Staphylococcus aureus (strain N315).